The chain runs to 140 residues: Nucleoside diphosphate kinase (140 aa).

ATP is bound by residues Lys-11, Phe-59, Arg-87, Thr-93, Arg-104, and Asn-114. The active-site Pros-phosphohistidine intermediate is the His-117.

This sequence belongs to the NDK family. Homotetramer. Mg(2+) serves as cofactor.

The protein localises to the cytoplasm. It carries out the reaction a 2'-deoxyribonucleoside 5'-diphosphate + ATP = a 2'-deoxyribonucleoside 5'-triphosphate + ADP. The enzyme catalyses a ribonucleoside 5'-diphosphate + ATP = a ribonucleoside 5'-triphosphate + ADP. Its function is as follows. Major role in the synthesis of nucleoside triphosphates other than ATP. The ATP gamma phosphate is transferred to the NDP beta phosphate via a ping-pong mechanism, using a phosphorylated active-site intermediate. This is Nucleoside diphosphate kinase from Bartonella henselae (strain ATCC 49882 / DSM 28221 / CCUG 30454 / Houston 1) (Rochalimaea henselae).